Reading from the N-terminus, the 74-residue chain is Anionic peptide clone 8 (74 aa).

Positions 1-24 (MVSKSLIVLLLVSVLVSTFFTTEA) are cleaved as a signal peptide.

Belongs to the non-disulfide-bridged peptide (NDBP) superfamily. Long chain multifunctional peptide (group 2) family. In terms of tissue distribution, expressed by the venom gland.

The protein resides in the secreted. Its function is as follows. May be an antimicrobial peptide. The chain is Anionic peptide clone 8 from Tityus costatus (Brazilian scorpion).